A 147-amino-acid chain; its full sequence is Putative pre-16S rRNA nuclease (147 aa).

Belongs to the YqgF nuclease family.

It is found in the cytoplasm. In terms of biological role, could be a nuclease involved in processing of the 5'-end of pre-16S rRNA. This chain is Putative pre-16S rRNA nuclease, found in Limosilactobacillus reuteri (strain DSM 20016) (Lactobacillus reuteri).